Here is a 103-residue protein sequence, read N- to C-terminus: Cobalt transport protein CbiN (103 aa).

2 consecutive transmembrane segments (helical) span residues Val6 to Val26 and Leu68 to Leu88.

Belongs to the CbiN family. In terms of assembly, forms an energy-coupling factor (ECF) transporter complex composed of an ATP-binding protein (A component, CbiO), a transmembrane protein (T component, CbiQ) and 2 possible substrate-capture proteins (S components, CbiM and CbiN) of unknown stoichimetry.

The protein localises to the cell membrane. It functions in the pathway cofactor biosynthesis; adenosylcobalamin biosynthesis. In terms of biological role, part of the energy-coupling factor (ECF) transporter complex CbiMNOQ involved in cobalt import. The chain is Cobalt transport protein CbiN from Clostridium perfringens (strain 13 / Type A).